The chain runs to 233 residues: Probable transglycosylase IsaA (233 aa).

The N-terminal stretch at 1-29 is a signal peptide; that stretch reads MKKTIMASSLAVALGVTGYAAGTGHQAHA.

Belongs to the transglycosylase family. IsaA subfamily.

The protein localises to the secreted. Functionally, is able to cleave peptidoglycan. The sequence is that of Probable transglycosylase IsaA (isaA) from Staphylococcus aureus (strain Mu3 / ATCC 700698).